The following is an 89-amino-acid chain: Small ribosomal subunit protein bS20 (89 aa).

The protein belongs to the bacterial ribosomal protein bS20 family.

In terms of biological role, binds directly to 16S ribosomal RNA. In Wolbachia sp. subsp. Brugia malayi (strain TRS), this protein is Small ribosomal subunit protein bS20.